The primary structure comprises 94 residues: Large ribosomal subunit protein bL27 (94 aa).

Positions 1-9 (MLKLNLQFF) are excised as a propeptide. Residues 13 to 32 (KGLGSTKNGRDSESKRLGAK) form a disordered region. The segment covering 20–32 (NGRDSESKRLGAK) has biased composition (basic and acidic residues).

This sequence belongs to the bacterial ribosomal protein bL27 family. Post-translationally, the N-terminus is cleaved by ribosomal processing cysteine protease Prp.

The protein is Large ribosomal subunit protein bL27 of Staphylococcus saprophyticus subsp. saprophyticus (strain ATCC 15305 / DSM 20229 / NCIMB 8711 / NCTC 7292 / S-41).